The following is a 450-amino-acid chain: tRNA modification GTPase MnmE (450 aa).

Residues R23, E80, and R123 each coordinate (6S)-5-formyl-5,6,7,8-tetrahydrofolate. A TrmE-type G domain is found at 219–372 (GLHVVLAGKP…LRQRLLQLAG (154 aa)). N229 lines the K(+) pocket. GTP is bound by residues 229-234 (NVGKSS), 248-254 (TPIAGTT), 273-276 (DTAG), and 353-355 (SAR). S233 contacts Mg(2+). K(+) contacts are provided by T248, I250, and T253. T254 contacts Mg(2+). K450 is a (6S)-5-formyl-5,6,7,8-tetrahydrofolate binding site.

It belongs to the TRAFAC class TrmE-Era-EngA-EngB-Septin-like GTPase superfamily. TrmE GTPase family. As to quaternary structure, homodimer. Heterotetramer of two MnmE and two MnmG subunits. K(+) is required as a cofactor.

It is found in the cytoplasm. Functionally, exhibits a very high intrinsic GTPase hydrolysis rate. Involved in the addition of a carboxymethylaminomethyl (cmnm) group at the wobble position (U34) of certain tRNAs, forming tRNA-cmnm(5)s(2)U34. The polypeptide is tRNA modification GTPase MnmE (Bordetella bronchiseptica (strain ATCC BAA-588 / NCTC 13252 / RB50) (Alcaligenes bronchisepticus)).